Consider the following 256-residue polypeptide: Hydroxyacylglutathione hydrolase (256 aa).

Positions 57, 59, 61, 62, 115, 134, and 172 each coordinate Zn(2+).

The protein belongs to the metallo-beta-lactamase superfamily. Glyoxalase II family. In terms of assembly, monomer. It depends on Zn(2+) as a cofactor.

The enzyme catalyses an S-(2-hydroxyacyl)glutathione + H2O = a 2-hydroxy carboxylate + glutathione + H(+). The protein operates within secondary metabolite metabolism; methylglyoxal degradation; (R)-lactate from methylglyoxal: step 2/2. Thiolesterase that catalyzes the hydrolysis of S-D-lactoyl-glutathione to form glutathione and D-lactic acid. The protein is Hydroxyacylglutathione hydrolase of Rhizobium johnstonii (strain DSM 114642 / LMG 32736 / 3841) (Rhizobium leguminosarum bv. viciae).